Here is a 460-residue protein sequence, read N- to C-terminus: Argininosuccinate lyase (460 aa).

It belongs to the lyase 1 family. Argininosuccinate lyase subfamily.

Its subcellular location is the cytoplasm. The enzyme catalyses 2-(N(omega)-L-arginino)succinate = fumarate + L-arginine. The protein operates within amino-acid biosynthesis; L-arginine biosynthesis; L-arginine from L-ornithine and carbamoyl phosphate: step 3/3. In Lacticaseibacillus paracasei (strain ATCC 334 / BCRC 17002 / CCUG 31169 / CIP 107868 / KCTC 3260 / NRRL B-441) (Lactobacillus paracasei), this protein is Argininosuccinate lyase.